Reading from the N-terminus, the 214-residue chain is NADH-quinone oxidoreductase subunit C (214 aa).

It belongs to the complex I 30 kDa subunit family. NDH-1 is composed of 14 different subunits. Subunits NuoB, C, D, E, F, and G constitute the peripheral sector of the complex.

The protein resides in the cell inner membrane. It catalyses the reaction a quinone + NADH + 5 H(+)(in) = a quinol + NAD(+) + 4 H(+)(out). Functionally, NDH-1 shuttles electrons from NADH, via FMN and iron-sulfur (Fe-S) centers, to quinones in the respiratory chain. The immediate electron acceptor for the enzyme in this species is believed to be ubiquinone. Couples the redox reaction to proton translocation (for every two electrons transferred, four hydrogen ions are translocated across the cytoplasmic membrane), and thus conserves the redox energy in a proton gradient. The protein is NADH-quinone oxidoreductase subunit C of Francisella tularensis subsp. holarctica (strain LVS).